A 280-amino-acid chain; its full sequence is UDP-3-O-acyl-N-acetylglucosamine deacetylase (280 aa).

3 residues coordinate Zn(2+): histidine 79, histidine 237, and aspartate 241. The active-site Proton donor is the histidine 264.

This sequence belongs to the LpxC family. It depends on Zn(2+) as a cofactor.

The enzyme catalyses a UDP-3-O-[(3R)-3-hydroxyacyl]-N-acetyl-alpha-D-glucosamine + H2O = a UDP-3-O-[(3R)-3-hydroxyacyl]-alpha-D-glucosamine + acetate. Its pathway is glycolipid biosynthesis; lipid IV(A) biosynthesis; lipid IV(A) from (3R)-3-hydroxytetradecanoyl-[acyl-carrier-protein] and UDP-N-acetyl-alpha-D-glucosamine: step 2/6. Functionally, catalyzes the hydrolysis of UDP-3-O-myristoyl-N-acetylglucosamine to form UDP-3-O-myristoylglucosamine and acetate, the committed step in lipid A biosynthesis. This chain is UDP-3-O-acyl-N-acetylglucosamine deacetylase, found in Chlamydia caviae (strain ATCC VR-813 / DSM 19441 / 03DC25 / GPIC) (Chlamydophila caviae).